Consider the following 478-residue polypeptide: NADH-quinone oxidoreductase subunit N (478 aa).

13 helical membrane-spanning segments follow: residues 7-27 (SFIPAIPEIVLLTLTSLLLIA), 46-66 (ILLVVGYLVLTSFSTSQVLTF), 74-94 (AFGDILKLVIVVVSMGIFLFS), 109-129 (FTLGLFGVLGMFVMVSAYNLI), 163-183 (FVLGALATGMLLYGFSMIYGA), 204-224 (VVLSFGVVFIVIGLAFKLGAV), 237-257 (APTAVTLYIGTAPKIAAFAML), 273-293 (QSLIVMISVLSLIVGAVITLV), 300-320 (LLAYSGIGHIGFILLGIIAAN), 328-348 (MFYTIVYSITALAGFGMIVAL), 371-391 (LALMMLFIMFSMAGIPPFVGF), 405-425 (GFTWLAVLAVVMAVISAFYYL), and 451-471 (WAVSFVSIALLLLGLMPSSLI).

It belongs to the complex I subunit 2 family. As to quaternary structure, NDH-1 is composed of 14 different subunits. Subunits NuoA, H, J, K, L, M, N constitute the membrane sector of the complex.

The protein localises to the cell inner membrane. It carries out the reaction a quinone + NADH + 5 H(+)(in) = a quinol + NAD(+) + 4 H(+)(out). NDH-1 shuttles electrons from NADH, via FMN and iron-sulfur (Fe-S) centers, to quinones in the respiratory chain. The immediate electron acceptor for the enzyme in this species is believed to be ubiquinone. Couples the redox reaction to proton translocation (for every two electrons transferred, four hydrogen ions are translocated across the cytoplasmic membrane), and thus conserves the redox energy in a proton gradient. The polypeptide is NADH-quinone oxidoreductase subunit N (Hydrogenovibrio crunogenus (strain DSM 25203 / XCL-2) (Thiomicrospira crunogena)).